The following is a 184-amino-acid chain: Holliday junction branch migration complex subunit RuvA (184 aa).

Residues 1 to 64 (MIVAVEGIIT…EDADLLYGFL (64 aa)) are domain I. The tract at residues 65-145 (DEKEKRMFEM…ANDGEQYKIE (81 aa)) is domain II. Residue glutamate 145 is a region of interest, flexible linker. The domain III stretch occupies residues 145–184 (ETISALENLGFKRDKINKILLNCKSTNTADLIKEALKKLA).

The protein belongs to the RuvA family. Homotetramer. Forms an RuvA(8)-RuvB(12)-Holliday junction (HJ) complex. HJ DNA is sandwiched between 2 RuvA tetramers; dsDNA enters through RuvA and exits via RuvB. An RuvB hexamer assembles on each DNA strand where it exits the tetramer. Each RuvB hexamer is contacted by two RuvA subunits (via domain III) on 2 adjacent RuvB subunits; this complex drives branch migration. In the full resolvosome a probable DNA-RuvA(4)-RuvB(12)-RuvC(2) complex forms which resolves the HJ.

The protein localises to the cytoplasm. In terms of biological role, the RuvA-RuvB-RuvC complex processes Holliday junction (HJ) DNA during genetic recombination and DNA repair, while the RuvA-RuvB complex plays an important role in the rescue of blocked DNA replication forks via replication fork reversal (RFR). RuvA specifically binds to HJ cruciform DNA, conferring on it an open structure. The RuvB hexamer acts as an ATP-dependent pump, pulling dsDNA into and through the RuvAB complex. HJ branch migration allows RuvC to scan DNA until it finds its consensus sequence, where it cleaves and resolves the cruciform DNA. The polypeptide is Holliday junction branch migration complex subunit RuvA (Campylobacter hominis (strain ATCC BAA-381 / DSM 21671 / CCUG 45161 / LMG 19568 / NCTC 13146 / CH001A)).